A 333-amino-acid polypeptide reads, in one-letter code: DNA-directed RNA polymerase subunit alpha (333 aa).

Residues 1 to 235 (MQTNLLKPKA…EQLAVFAQLE (235 aa)) are alpha N-terminal domain (alpha-NTD). The interval 253 to 333 (FDPILLRPVD…NWPPQGLDKR (81 aa)) is alpha C-terminal domain (alpha-CTD).

It belongs to the RNA polymerase alpha chain family. In terms of assembly, homodimer. The RNAP catalytic core consists of 2 alpha, 1 beta, 1 beta' and 1 omega subunit. When a sigma factor is associated with the core the holoenzyme is formed, which can initiate transcription.

It carries out the reaction RNA(n) + a ribonucleoside 5'-triphosphate = RNA(n+1) + diphosphate. Functionally, DNA-dependent RNA polymerase catalyzes the transcription of DNA into RNA using the four ribonucleoside triphosphates as substrates. The chain is DNA-directed RNA polymerase subunit alpha from Methylibium petroleiphilum (strain ATCC BAA-1232 / LMG 22953 / PM1).